A 204-amino-acid chain; its full sequence is Somatotropin (204 aa).

An N-terminal signal peptide occupies residues 1–17; sequence MDRVLLLLSVLTLGVSS. Residue glutamine 18 is modified to Pyrrolidone carboxylic acid. Histidine 36 is a Zn(2+) binding site. A disulfide bridge links cysteine 69 with cysteine 177. Position 186 (glutamate 186) interacts with Zn(2+). Cysteines 194 and 202 form a disulfide.

It belongs to the somatotropin/prolactin family.

The protein localises to the secreted. Functionally, growth hormone plays an important role in growth control and is involved in the regulation of several anabolic processes. Implicated as an osmoregulatory substance important for seawater adaptation. The protein is Somatotropin (gh) of Larimichthys crocea (Large yellow croaker).